Reading from the N-terminus, the 515-residue chain is Ribonuclease Y (515 aa).

Residues 6–26 (LTSFVIITLSLAVGLTGGYYG) traverse the membrane as a helical segment. The 86-residue stretch at 205–290 (TVSVVPLPND…EMVEKARKEI (86 aa)) folds into the KH domain. One can recognise an HD domain in the interval 331-424 (VLRHSVEVAH…VQAADAISAS (94 aa)).

Belongs to the RNase Y family.

It is found in the cell membrane. In terms of biological role, endoribonuclease that initiates mRNA decay. The polypeptide is Ribonuclease Y (Syntrophomonas wolfei subsp. wolfei (strain DSM 2245B / Goettingen)).